Consider the following 49-residue polypeptide: uncharacterized protein (49 aa).

A signal peptide spans 1 to 22 (MKLNAFHLVVVVLIVSIFSVSS).

It localises to the secreted. This is an uncharacterized protein from Dictyostelium discoideum (Social amoeba).